A 499-amino-acid chain; its full sequence is Putative antiporter subunit mnhD2 (499 aa).

14 consecutive transmembrane segments (helical) span residues 3–23 (SNLL…LVFT), 32–52 (ILYI…LIYV), 78–98 (LSLV…SYGF), 108–128 (YYLP…FLTS), 130–150 (LFNL…LVTL), 161–181 (IIYV…IGLL), 206–226 (IIII…LVLF), 240–260 (LAAL…IRFF), 273–293 (PLLV…VIAY), 308–328 (IGFV…GAIF), 330–350 (LAND…LVYM), 368–388 (FFGV…PFSG), 403–423 (GNFI…YSLF), and 450–470 (TILG…PVVM).

The protein belongs to the CPA3 antiporters (TC 2.A.63) subunit D family. As to quaternary structure, may form a heterooligomeric complex that consists of seven subunits: mnhA2, mnhB2, mnhC2, mnhD2, mnhE2, mnhF2 and mnhG2.

It is found in the cell membrane. In Staphylococcus haemolyticus (strain JCSC1435), this protein is Putative antiporter subunit mnhD2 (mnhD2).